The sequence spans 494 residues: Alpha-amylase-related protein (494 aa).

An N-terminal signal peptide occupies residues 1–20 (MFKFASAVILCVVAASSTLA). Residue glutamine 21 is modified to Pyrrolidone carboxylic acid. Cysteine 48 and cysteine 104 form a disulfide bridge. Ca(2+) contacts are provided by asparagine 118, glutamine 169, and aspartate 178. Cysteine 157 and cysteine 171 are joined by a disulfide. Arginine 206 lines the chloride pocket. The active-site Nucleophile is the aspartate 208. A Ca(2+)-binding site is contributed by histidine 212. Glutamate 245 (proton donor) is an active-site residue. Residues asparagine 308 and arginine 343 each contribute to the chloride site. 3 disulfide bridges follow: cysteine 376–cysteine 382, cysteine 418–cysteine 441, and cysteine 448–cysteine 460.

This sequence belongs to the glycosyl hydrolase 13 family. In terms of assembly, monomer. Ca(2+) serves as cofactor. It depends on chloride as a cofactor.

The protein localises to the secreted. It carries out the reaction Endohydrolysis of (1-&gt;4)-alpha-D-glucosidic linkages in polysaccharides containing three or more (1-&gt;4)-alpha-linked D-glucose units.. The chain is Alpha-amylase-related protein (Amyrel) from Drosophila varians (Fruit fly).